A 314-amino-acid polypeptide reads, in one-letter code: MEIPVIEPLFTKVTEDIPGAEGPVFDKNGDFYIVAPEVEVNGKPAGEILRIDLKTGKKTVICKPEVNGYGGIPAGCQCDRDANQLFVADMRLGLLVVQTDGTFEEIAKKDSEGRRMQGCNDCAFDYEGNLWITAPAGEVAPADYTRSMQEKFGSIYCFTTDGQMIQVDTAFQFPNGIAVRHMNDGRPYQLIVAETPTKKLWSYDIKGPAKIENKKVWGHIPGTHEGGADGMDFDEDNNLLVANWGSSHIEVFGPDGGQPKMRIRCPFEKPSNLHFKPQTKTIFVTEHENNAVWKFEWQRNGKKQYCETLKFGIF.

The Ca(2+) site is built by E21, N120, N175, D229, D232, L273, and H274. H287 functions as the Proton acceptor in the catalytic mechanism.

Monomer. Ca(2+) is required as a cofactor.

The catalysed reaction is diisopropyl fluorophosphate + H2O = diisopropyl phosphate + fluoride + 2 H(+). Its activity is regulated as follows. Inhibited by chelating agents. In terms of biological role, biological function and substrate unknown. However, it is capable of acting on phosphorus anhydride bonds (such as phosphorus-halide and phosphorus-cyanide) in organophosphorus compounds (including nerve gases). The protein is Diisopropyl-fluorophosphatase of Loligo vulgaris (Common European squid).